The following is a 472-amino-acid chain: 2-methylcitrate synthase, mitochondrial (472 aa).

The N-terminal 29 residues, methionine 1–tyrosine 29, are a transit peptide targeting the mitochondrion. Residues arginine 75 and lysine 193 each coordinate CoA. Histidine 271 is an oxaloacetate binding site. A CoA-binding site is contributed by leucine 306. Histidine 307 is a catalytic residue. CoA-binding residues include valine 348, glycine 350, and tyrosine 351. Histidine 353 and arginine 362 together coordinate oxaloacetate. Histidine 353 is a catalytic residue. CoA is bound by residues threonine 402, lysine 403, and asparagine 408. Aspartate 410 is an active-site residue. Positions 436 and 456 each coordinate oxaloacetate.

It belongs to the citrate synthase family. As to quaternary structure, homodimer.

It localises to the mitochondrion matrix. The catalysed reaction is propanoyl-CoA + oxaloacetate + H2O = (2S,3S)-2-methylcitrate + CoA + H(+). It carries out the reaction oxaloacetate + acetyl-CoA + H2O = citrate + CoA + H(+). It functions in the pathway organic acid metabolism; propanoate degradation. Functionally, component of the methylcitrate cycle that catalyzes the synthesis of (2S,3S)-2-methylcitrate from propionyl-CoA and oxaloacetate. Plays an important role in detoxification of propionyl-CoA, an inhibitor of both primary and secondary metabolism. Also has citrate synthase activity using as substrates acetyl-CoA and oxaloacetate. The polypeptide is 2-methylcitrate synthase, mitochondrial (Fusarium solani (Filamentous fungus)).